A 338-amino-acid chain; its full sequence is UPF0324 membrane protein TauZ (338 aa).

The next 9 helical transmembrane spans lie at 36–55, 75–92, 96–118, 125–147, 162–184, 223–245, 255–277, 290–309, and 314–336; these read YGAP…NFLA, LGVA…LAAL, AIAL…SRLV, ALLT…AAVL, LSVT…LFGF, LIRV…ARGL, PLLP…GLIP, WALL…GKML, and GAIA…GLHL.

This sequence belongs to the UPF0324 family.

The protein resides in the cell membrane. This is UPF0324 membrane protein TauZ (tauZ) from Paracoccus pantotrophus (Thiosphaera pantotropha).